A 341-amino-acid chain; its full sequence is UDP-N-acetylenolpyruvoylglucosamine reductase (341 aa).

One can recognise an FAD-binding PCMH-type domain in the interval 13-185 (FGVEQSCLSM…TAVGLRLPKA (173 aa)). The active site involves Arg-161. Ser-231 functions as the Proton donor in the catalytic mechanism. Glu-327 is a catalytic residue.

It belongs to the MurB family. FAD serves as cofactor.

It localises to the cytoplasm. The catalysed reaction is UDP-N-acetyl-alpha-D-muramate + NADP(+) = UDP-N-acetyl-3-O-(1-carboxyvinyl)-alpha-D-glucosamine + NADPH + H(+). Its pathway is cell wall biogenesis; peptidoglycan biosynthesis. Cell wall formation. This is UDP-N-acetylenolpyruvoylglucosamine reductase from Shewanella sp. (strain MR-4).